The sequence spans 496 residues: E3 ubiquitin-protein ligase XIAP (496 aa).

3 BIR repeats span residues 26-93, 163-230, and 264-329; these read EFNR…CRFI, EEAR…CFFV, and YDAR…CKYL. Residues Cys299, Cys302, and His319 each coordinate Zn(2+). A Glycyl lysine isopeptide (Lys-Gly) (interchain with G-Cter in ubiquitin) cross-link involves residue Lys321. Cys326 contacts Zn(2+). Residue Lys327 forms a Glycyl lysine isopeptide (Lys-Gly) (interchain with G-Cter in ubiquitin) linkage. Position 449 is an S-nitrosocysteine (Cys449). An RING-type zinc finger spans residues 449-484; sequence CKICMDRNIAIVFVPCGHLVTCKQCAEAVDKCPMCC.

It belongs to the IAP family. In terms of assembly, monomer, and homodimer. Interacts (via BIR3 domain) with DIABLO/SMAC; the interaction inhibits apoptotic suppressor activity. Interacts with HTRA2/PRSS25; the interaction inhibits apoptotic suppressor activity. Interacts with TAB1/MAP3K7IP1 and AIFM1. Interaction with DIABLO/SMAC hinders binding of TAB1/MAP3K7IP1 and AIFM1. Interacts with TCF25 and COMMD1. Interacts (via BIR3 domain) with SEPTIN4. Interacts with RIP1, RIP2, RIP3, RIP4, CCS and USP19. Interacts (via BIR 2 domain and BIR 3 domain) with HAX1 (via C-terminus) and this interaction blocks ubiquitination of XIAP/BIRC4. Interacts with the monomeric form of BIRC5/survivin. Interacts with TLE3 and TCF7L2/TCF4. Interacts (via BIR 3 and RING domains) with PDCL3. In terms of processing, S-Nitrosylation down-regulates its E3 ubiquitin-protein ligase activity. Post-translationally, autoubiquitinated. Ubiquitinated by TRIM32; leading to proteasomal degradation.

The protein localises to the cytoplasm. It localises to the nucleus. The enzyme catalyses S-ubiquitinyl-[E2 ubiquitin-conjugating enzyme]-L-cysteine + [acceptor protein]-L-lysine = [E2 ubiquitin-conjugating enzyme]-L-cysteine + N(6)-ubiquitinyl-[acceptor protein]-L-lysine.. Multi-functional protein which regulates not only caspases and apoptosis, but also modulates inflammatory signaling and immunity, copper homeostasis, mitogenic kinase signaling, cell proliferation, as well as cell invasion and metastasis. Acts as a direct caspase inhibitor. Directly bind to the active site pocket of CASP3 and CASP7 and obstructs substrate entry. Inactivates CASP9 by keeping it in a monomeric, inactive state. Acts as an E3 ubiquitin-protein ligase regulating NF-kappa-B signaling and the target proteins for its E3 ubiquitin-protein ligase activity include: RIPK1, RIPK2, MAP3K2/MEKK2, DIABLO/SMAC, AIFM1, CCS, PTEN and BIRC5/survivin. Acts as an important regulator of innate immunity by mediating 'Lys-63'-linked polyubiquitination of RIPK2 downstream of NOD1 and NOD2, thereby transforming RIPK2 into a scaffolding protein for downstream effectors, ultimately leading to activation of the NF-kappa-B and MAP kinases signaling. 'Lys-63'-linked polyubiquitination of RIPK2 also promotes recruitment of the LUBAC complex to RIPK2. Regulates the BMP signaling pathway and the SMAD and MAP3K7/TAK1 dependent pathways leading to NF-kappa-B and JNK activation. Ubiquitination of CCS leads to enhancement of its chaperone activity toward its physiologic target, SOD1, rather than proteasomal degradation. Ubiquitination of MAP3K2/MEKK2 and AIFM1 does not lead to proteasomal degradation. Plays a role in copper homeostasis by ubiquitinating COMMD1 and promoting its proteasomal degradation. Can also function as E3 ubiquitin-protein ligase of the NEDD8 conjugation pathway, targeting effector caspases for neddylation and inactivation. Ubiquitinates and therefore mediates the proteasomal degradation of BCL2 in response to apoptosis. Protects cells from spontaneous formation of the ripoptosome, a large multi-protein complex that has the capability to kill cancer cells in a caspase-dependent and caspase-independent manner. Suppresses ripoptosome formation by ubiquitinating RIPK1 and CASP8. Acts as a positive regulator of Wnt signaling and ubiquitinates TLE1, TLE2, TLE3, TLE4 and AES. Ubiquitination of TLE3 results in inhibition of its interaction with TCF7L2/TCF4 thereby allowing efficient recruitment and binding of the transcriptional coactivator beta-catenin to TCF7L2/TCF4 that is required to initiate a Wnt-specific transcriptional program. The chain is E3 ubiquitin-protein ligase XIAP (Xiap) from Rattus norvegicus (Rat).